The primary structure comprises 95 residues: Aspartyl/glutamyl-tRNA(Asn/Gln) amidotransferase subunit C (95 aa).

The protein belongs to the GatC family. In terms of assembly, heterotrimer of A, B and C subunits.

It carries out the reaction L-glutamyl-tRNA(Gln) + L-glutamine + ATP + H2O = L-glutaminyl-tRNA(Gln) + L-glutamate + ADP + phosphate + H(+). The enzyme catalyses L-aspartyl-tRNA(Asn) + L-glutamine + ATP + H2O = L-asparaginyl-tRNA(Asn) + L-glutamate + ADP + phosphate + 2 H(+). Functionally, allows the formation of correctly charged Asn-tRNA(Asn) or Gln-tRNA(Gln) through the transamidation of misacylated Asp-tRNA(Asn) or Glu-tRNA(Gln) in organisms which lack either or both of asparaginyl-tRNA or glutaminyl-tRNA synthetases. The reaction takes place in the presence of glutamine and ATP through an activated phospho-Asp-tRNA(Asn) or phospho-Glu-tRNA(Gln). The protein is Aspartyl/glutamyl-tRNA(Asn/Gln) amidotransferase subunit C of Pseudomonas paraeruginosa (strain DSM 24068 / PA7) (Pseudomonas aeruginosa (strain PA7)).